A 124-amino-acid chain; its full sequence is Small ribosomal subunit protein uS12 (124 aa).

Aspartate 89 is modified (3-methylthioaspartic acid).

This sequence belongs to the universal ribosomal protein uS12 family. As to quaternary structure, part of the 30S ribosomal subunit. Contacts proteins S8 and S17. May interact with IF1 in the 30S initiation complex.

In terms of biological role, with S4 and S5 plays an important role in translational accuracy. Interacts with and stabilizes bases of the 16S rRNA that are involved in tRNA selection in the A site and with the mRNA backbone. Located at the interface of the 30S and 50S subunits, it traverses the body of the 30S subunit contacting proteins on the other side and probably holding the rRNA structure together. The combined cluster of proteins S8, S12 and S17 appears to hold together the shoulder and platform of the 30S subunit. The sequence is that of Small ribosomal subunit protein uS12 from Mannheimia succiniciproducens (strain KCTC 0769BP / MBEL55E).